The following is a 679-amino-acid chain: Pollen receptor-like kinase 4 (679 aa).

Positions 1 to 39 (MLTWETPVMLASNTASTKKLAFITTFLIIVLCPVTMVMS) are cleaved as a signal peptide. LRR repeat units lie at residues 118-141 (IKNL…VKNF), 142-165 (GALK…AFDG), 167-191 (HHLK…AYLP), 193-217 (LLEL…DLKL), and 234-257 (SNMD…PCSS). Positions 252–269 (LSPCSSDSGSSPDLPSSP) are enriched in low complexity. The interval 252–271 (LSPCSSDSGSSPDLPSSPTE) is disordered. The chain crosses the membrane as a helical span at residues 278–298 (FFIIAIVLIVIGIILMIISLV). The disordered stretch occupies residues 311–344 (SAYPSAGQDRTEKYNYDQSTDKDKAADSVTSYTS). A compositionally biased stretch (basic and acidic residues) spans 319-336 (DRTEKYNYDQSTDKDKAA). Positions 372–646 (RASAEVLGSG…RDAVEKIERL (275 aa)) constitute a Protein kinase domain. Serine 374 is modified (phosphoserine). Residues 378–386 (LGSGSFGSS) and lysine 400 contribute to the ATP site. Serine 452 and serine 455 each carry phosphoserine. Threonine 472 carries the phosphothreonine modification. Tyrosine 542 is subject to Phosphotyrosine.

The protein belongs to the protein kinase superfamily. Ser/Thr protein kinase family. As to quaternary structure, interacts in vitro with ROPGEF1 (via PRONE domain). Interacts weakly with the GRI peptide. In terms of tissue distribution, expressed in pollen and/or in flowers, but not in leaves.

The protein resides in the membrane. It catalyses the reaction L-seryl-[protein] + ATP = O-phospho-L-seryl-[protein] + ADP + H(+). The enzyme catalyses L-threonyl-[protein] + ATP = O-phospho-L-threonyl-[protein] + ADP + H(+). Its function is as follows. Receptor-like kinase involved in the control of pollen germination and pollen tube polar growth. Can phosphorylate ROPGEF1 in vitro. This chain is Pollen receptor-like kinase 4, found in Arabidopsis thaliana (Mouse-ear cress).